Consider the following 433-residue polypeptide: MRMIDIIEKKRDGHTLTTEEINFFIDGYVKGDIPDYQASSLAMAIYFQDMNDDERAALTMAMVNSGDMIDLSDIKGVKVDKHSTGGVGDTTTLVLAPLVAAVDVPVAKMSGRGLGHTGGTIDKLEAIDGFHVEIDEATFVKLVNENKVAVVGQSGNLTPADKKIYALRDVTGTVNSIPLIASSIMSKKIAAGADAIVLDVKTGSGAFMKTLEDAEALAHAMVRIGNNVGRNTMAIISDMNQPLGRAIGNALELQEAIDTLKGQGPKDLTELVLTLGSQMVVLANKAETLEEARALLIEAIDSGAALEKFKTFIKNQGGDETVIDHPERLPQAQYQIEYKAKKSGYVTELVSNDIGVASMMLGAGRLTKEDDIDLAVGIVLNKKIGDKVEEGESLLTIHSNRQDVDDVVKKLDSSITIADHVVSPTLIHKIITE.

81–83 (KHS) contributes to the phosphate binding site. Positions 88 and 90 each coordinate K(+). Residues Thr-92, 108–110 (KMS), and Thr-120 each bind phosphate. 2 residues coordinate substrate: Arg-168 and Lys-187. Residues Leu-243, Ala-246, and Glu-255 each coordinate K(+).

This sequence belongs to the thymidine/pyrimidine-nucleoside phosphorylase family. In terms of assembly, homodimer. Requires K(+) as cofactor.

The enzyme catalyses uridine + phosphate = alpha-D-ribose 1-phosphate + uracil. It catalyses the reaction thymidine + phosphate = 2-deoxy-alpha-D-ribose 1-phosphate + thymine. The catalysed reaction is 2'-deoxyuridine + phosphate = 2-deoxy-alpha-D-ribose 1-phosphate + uracil. In terms of biological role, catalyzes phosphorolysis of the pyrimidine nucleosides uridine, thymidine and 2'-deoxyuridine with the formation of the corresponding pyrimidine base and ribose-1-phosphate. This Staphylococcus aureus (strain bovine RF122 / ET3-1) protein is Pyrimidine-nucleoside phosphorylase (pdp).